The sequence spans 165 residues: 3-isopropylmalate dehydratase small subunit (165 aa).

This sequence belongs to the LeuD family. LeuD type 2 subfamily. In terms of assembly, heterodimer of LeuC and LeuD.

It carries out the reaction (2R,3S)-3-isopropylmalate = (2S)-2-isopropylmalate. It functions in the pathway amino-acid biosynthesis; L-leucine biosynthesis; L-leucine from 3-methyl-2-oxobutanoate: step 2/4. Functionally, catalyzes the isomerization between 2-isopropylmalate and 3-isopropylmalate, via the formation of 2-isopropylmaleate. This is 3-isopropylmalate dehydratase small subunit from Halothermothrix orenii (strain H 168 / OCM 544 / DSM 9562).